A 235-amino-acid polypeptide reads, in one-letter code: Urease accessory protein UreF (235 aa).

It belongs to the UreF family. UreD, UreF and UreG form a complex that acts as a GTP-hydrolysis-dependent molecular chaperone, activating the urease apoprotein by helping to assemble the nickel containing metallocenter of UreC. The UreE protein probably delivers the nickel.

The protein localises to the cytoplasm. Its function is as follows. Required for maturation of urease via the functional incorporation of the urease nickel metallocenter. This Haemophilus influenzae (strain 86-028NP) protein is Urease accessory protein UreF.